Here is a 351-residue protein sequence, read N- to C-terminus: Heat-inducible transcription repressor HrcA (351 aa).

It belongs to the HrcA family.

Negative regulator of class I heat shock genes (grpE-dnaK-dnaJ and groELS operons). Prevents heat-shock induction of these operons. This Clostridium tetani (strain Massachusetts / E88) protein is Heat-inducible transcription repressor HrcA.